The sequence spans 330 residues: DNA-directed RNA polymerase subunit alpha (330 aa).

The interval 1 to 237 (MYTEINEMLT…RQLHAFVDMK (237 aa)) is alpha N-terminal domain (alpha-NTD). Residues 251–330 (FDPVLLRSVD…ENWPPASLGE (80 aa)) form an alpha C-terminal domain (alpha-CTD) region.

The protein belongs to the RNA polymerase alpha chain family. In terms of assembly, homodimer. The RNAP catalytic core consists of 2 alpha, 1 beta, 1 beta' and 1 omega subunit. When a sigma factor is associated with the core the holoenzyme is formed, which can initiate transcription.

It catalyses the reaction RNA(n) + a ribonucleoside 5'-triphosphate = RNA(n+1) + diphosphate. In terms of biological role, DNA-dependent RNA polymerase catalyzes the transcription of DNA into RNA using the four ribonucleoside triphosphates as substrates. This Legionella pneumophila (strain Corby) protein is DNA-directed RNA polymerase subunit alpha.